The sequence spans 345 residues: Phosphate acyltransferase (345 aa).

This sequence belongs to the PlsX family. As to quaternary structure, homodimer. Probably interacts with PlsY.

The protein resides in the cytoplasm. The enzyme catalyses a fatty acyl-[ACP] + phosphate = an acyl phosphate + holo-[ACP]. The protein operates within lipid metabolism; phospholipid metabolism. Functionally, catalyzes the reversible formation of acyl-phosphate (acyl-PO(4)) from acyl-[acyl-carrier-protein] (acyl-ACP). This enzyme utilizes acyl-ACP as fatty acyl donor, but not acyl-CoA. In Wolbachia pipientis subsp. Culex pipiens (strain wPip), this protein is Phosphate acyltransferase.